Consider the following 387-residue polypeptide: Protein SGT1 homolog (387 aa).

TPR repeat units follow at residues 1-34 (MEQL…SNNA), 36-67 (AFFK…DSNN), and 68-101 (SKYY…DSEN). Disordered stretches follow at residues 110-193 (KSKA…PSSG) and 299-323 (SPAV…EEKL). The segment covering 118–127 (NPTTTTTTTP) has biased composition (low complexity). Positions 128–138 (TPTPTPTPAPQ) are enriched in pro residues. The span at 139–185 (PVTTTTNPTPIPTTSNTTTTTNNNNNNNNNNNNNNNNNNTTTDSTTT) shows a compositional bias: low complexity. The CS domain occupies 193–282 (GNKVRHEWYQ…SRAIKWDTLE (90 aa)). Positions 301-387 (AVPSPYASKK…KGLEFKQYEK (87 aa)) constitute an SGS domain. A compositionally biased stretch (basic and acidic residues) spans 308 to 323 (SKKDWDKLPNEPEEKL).

The protein belongs to the SGT1 family.

Functionally, may play a role in ubiquitination and subsequent proteasomal degradation of target proteins. The chain is Protein SGT1 homolog (sugt1) from Dictyostelium discoideum (Social amoeba).